The sequence spans 1114 residues: Isoleucine--tRNA ligase (1114 aa).

A 'HIGH' region motif is present at residues 61 to 71 (PTANGQPGTHH). The short motif at 640-644 (KMSKH) is the 'KMSKS' region element. An ATP-binding site is contributed by Lys-643.

It belongs to the class-I aminoacyl-tRNA synthetase family. IleS type 2 subfamily. Monomer. Zn(2+) is required as a cofactor.

The protein localises to the cytoplasm. The catalysed reaction is tRNA(Ile) + L-isoleucine + ATP = L-isoleucyl-tRNA(Ile) + AMP + diphosphate. Catalyzes the attachment of isoleucine to tRNA(Ile). As IleRS can inadvertently accommodate and process structurally similar amino acids such as valine, to avoid such errors it has two additional distinct tRNA(Ile)-dependent editing activities. One activity is designated as 'pretransfer' editing and involves the hydrolysis of activated Val-AMP. The other activity is designated 'posttransfer' editing and involves deacylation of mischarged Val-tRNA(Ile). In Cutibacterium acnes (strain DSM 16379 / KPA171202) (Propionibacterium acnes), this protein is Isoleucine--tRNA ligase.